The following is a 187-amino-acid chain: Large ribosomal subunit protein uL5 (187 aa).

This sequence belongs to the universal ribosomal protein uL5 family. In terms of assembly, part of the 50S ribosomal subunit; part of the 5S rRNA/L5/L18/L25 subcomplex. Contacts the 5S rRNA and the P site tRNA. Forms a bridge to the 30S subunit in the 70S ribosome.

In terms of biological role, this is one of the proteins that bind and probably mediate the attachment of the 5S RNA into the large ribosomal subunit, where it forms part of the central protuberance. In the 70S ribosome it contacts protein S13 of the 30S subunit (bridge B1b), connecting the 2 subunits; this bridge is implicated in subunit movement. Contacts the P site tRNA; the 5S rRNA and some of its associated proteins might help stabilize positioning of ribosome-bound tRNAs. In Dinoroseobacter shibae (strain DSM 16493 / NCIMB 14021 / DFL 12), this protein is Large ribosomal subunit protein uL5.